We begin with the raw amino-acid sequence, 341 residues long: Platelet-activating factor receptor (341 aa).

Residues 1–16 (MEQNGSFRVDSEFRYT) are Extracellular-facing. N4 carries N-linked (GlcNAc...) asparagine glycosylation. The helical transmembrane segment at 17–38 (LFPIVYSVIFVLGVVANGYVLW) threads the bilayer. Topologically, residues 39-54 (VFATLYPSKKLNEIKI) are cytoplasmic. Residues 55–74 (FMVNLTVADLLFLMTLPLWI) traverse the membrane as a helical segment. Residues 75–91 (VYYSNEGDWIVHKFLCN) lie on the Extracellular side of the membrane. Residues C90 and C173 are joined by a disulfide bond. Residues 92-113 (LAGCLFFINTYCSVAFLGVITY) traverse the membrane as a helical segment. Residues 114 to 133 (NRYQAVAYPIKTAQATTRKR) lie on the Cytoplasmic side of the membrane. A helical transmembrane segment spans residues 134–155 (GITLSLVIWISIAATASYFLAT). The Extracellular segment spans residues 156 to 184 (DSTNVVPKKDGSGNITRCFEHYEPYSVPI). N169 is a glycosylation site (N-linked (GlcNAc...) asparagine). A helical membrane pass occupies residues 185 to 205 (LVVHIFITSCFFLVFFLIFYC). Residues 206-233 (NMVIIHTLLTRPVRQQRKPEVKRRALWM) are Cytoplasmic-facing. A helical membrane pass occupies residues 234–254 (VCTVLAVFVICFVPHHVVQLP). Topologically, residues 255-275 (WTLAELGYQTNFHQAINDAHQ) are extracellular. Residues 276–295 (ITLCLLSTNCVLDPVIYCFL) traverse the membrane as a helical segment. Residues 296 to 341 (TKKFRKHLSEKFYSMRSSRKCSRATSDTCTEVMMPANQTPVLPLKN) lie on the Cytoplasmic side of the membrane.

This sequence belongs to the G-protein coupled receptor 1 family. Interacts with ARRB1. In terms of tissue distribution, present in almost all organs including spleen, small intestine, kidney, lung, liver and brain.

The protein resides in the cell membrane. In terms of biological role, receptor for platelet activating factor, a chemotactic phospholipid mediator that possesses potent inflammatory, smooth-muscle contractile and hypotensive activity. Seems to mediate its action via a G protein that activates a phosphatidylinositol-calcium second messenger system. In Rattus norvegicus (Rat), this protein is Platelet-activating factor receptor (Ptafr).